The following is a 201-amino-acid chain: Small ribosomal subunit protein uS4c (201 aa).

The interval Ser-23 to Ser-42 is disordered. Residues Met-89–Tyr-151 enclose the S4 RNA-binding domain.

It belongs to the universal ribosomal protein uS4 family. In terms of assembly, part of the 30S ribosomal subunit. Contacts protein S5. The interaction surface between S4 and S5 is involved in control of translational fidelity.

The protein localises to the plastid. The protein resides in the chloroplast. In terms of biological role, one of the primary rRNA binding proteins, it binds directly to 16S rRNA where it nucleates assembly of the body of the 30S subunit. Its function is as follows. With S5 and S12 plays an important role in translational accuracy. The polypeptide is Small ribosomal subunit protein uS4c (rps4) (Morus indica (Mulberry)).